We begin with the raw amino-acid sequence, 278 residues long: Orotidine 5'-phosphate decarboxylase (278 aa).

Catalysis depends on Lys-95, which acts as the Proton donor.

Belongs to the OMP decarboxylase family. Type 2 subfamily.

It catalyses the reaction orotidine 5'-phosphate + H(+) = UMP + CO2. The protein operates within pyrimidine metabolism; UMP biosynthesis via de novo pathway; UMP from orotate: step 2/2. In Corynebacterium glutamicum (strain R), this protein is Orotidine 5'-phosphate decarboxylase.